Here is a 412-residue protein sequence, read N- to C-terminus: Protein ALF (412 aa).

Disordered regions lie at residues 1–47 (MDPE…PLPP) and 154–234 (GLSE…GISE). The segment covering 31–47 (PPQPPPPPLPPPQPLPP) has biased composition (pro residues). A compositionally biased stretch (basic residues) spans 187 to 196 (MRQRRRKKVV). Over residues 206-221 (MEEDEDTEEGQEDNED) the composition is skewed to acidic residues. 3 consecutive DNA-binding regions follow at residues 237–241 (REHPF), 306–313 (NKPKMRHY), and 377–380 (YVPT).

The protein belongs to the FLO/LFY family. Expressed in the floral meristem and also in the vegetative meristem.

It localises to the nucleus. In terms of biological role, probable transcription factor required for the specification of floral meristem identity. The chain is Protein ALF (ALF) from Petunia hybrida (Petunia).